Reading from the N-terminus, the 689-residue chain is DNA ligase (689 aa).

NAD(+) contacts are provided by residues 40-44 (DAEYD), 89-90 (SL), and Glu121. Lys123 (N6-AMP-lysine intermediate) is an active-site residue. Residues Arg144, Glu179, Lys295, and Lys319 each coordinate NAD(+). 4 residues coordinate Zn(2+): Cys413, Cys416, Cys431, and Cys437. The BRCT domain occupies 610–689 (RAQSSLTGKI…EEWLTLIKNA (80 aa)).

This sequence belongs to the NAD-dependent DNA ligase family. LigA subfamily. Mg(2+) serves as cofactor. Requires Mn(2+) as cofactor.

The catalysed reaction is NAD(+) + (deoxyribonucleotide)n-3'-hydroxyl + 5'-phospho-(deoxyribonucleotide)m = (deoxyribonucleotide)n+m + AMP + beta-nicotinamide D-nucleotide.. In terms of biological role, DNA ligase that catalyzes the formation of phosphodiester linkages between 5'-phosphoryl and 3'-hydroxyl groups in double-stranded DNA using NAD as a coenzyme and as the energy source for the reaction. It is essential for DNA replication and repair of damaged DNA. The chain is DNA ligase from Rickettsia akari (strain Hartford).